Consider the following 362-residue polypeptide: Protein Tob1 (362 aa).

The Bipartite nuclear localization signal motif lies at 22–39; it reads RRRVNIFGEELERLLKKK. The important for nuclear localization stretch occupies residues 82–92; it reads VRGNLPQDLSV. Residues 144 to 160 are compositionally biased toward low complexity; the sequence is DPASSVSSSPSPPFGHS. The interval 144–171 is disordered; sequence DPASSVSSSPSPPFGHSAAVSPTFMPRS. The tract at residues 161-220 is required for interaction with CPEB3; that stretch reads AAVSPTFMPRSTQPLTFTTATFAATKFGSTKMKNSGRSSKVARTSPINLGLTVNVNDLLK. T204 carries the phosphothreonine modification. The short motif at 228 to 236 is the Nuclear export signal element; the sequence is VHSLYGLGL. The disordered stretch occupies residues 234 to 284; sequence LGLGSQQQPQPQPQQQQQQQPSSSQPPPPLPQQQQQQPQQQQQQQQQTSAL. 2 stretches are compositionally biased toward low complexity: residues 238–256 and 265–280; these read SQQQ…QPSS and QQQQ…QQQQ.

It belongs to the BTG family. In terms of assembly, interacts with ERBB2. Interacts with CNOT7. Interacts with CPEB3 (via C-terminal RNA-binding region); recruits CNOT7 to CPEB3 to form a ternary complex required for mRNA deadenylation and decay. Interacts with CNOT8. Interacts with CPEB4. In terms of processing, phosphorylated on Ser and Thr residues. In terms of tissue distribution, ubiquitous.

It localises to the cytoplasm. The protein resides in the nucleus. Anti-proliferative protein; the function is mediated by association with deadenylase subunits of the CCR4-NOT complex. Mediates CPEB3-accelerated mRNA deadenylation by binding to CPEB3 and recruiting CNOT7 which leads to target mRNA deadenylation and decay. The sequence is that of Protein Tob1 (Tob1) from Mus musculus (Mouse).